Consider the following 525-residue polypeptide: GMP synthase [glutamine-hydrolyzing] (525 aa).

The Glutamine amidotransferase type-1 domain occupies 16-205 (PVLVVDFGAQ…LHDFAGLGAQ (190 aa)). Residue cysteine 93 is the Nucleophile of the active site. Catalysis depends on residues histidine 179 and glutamate 181. Residues 206-399 (WTPANIANAL…LGLPEEIVAR (194 aa)) enclose the GMPS ATP-PPase domain. 233 to 239 (SGGVDSA) contacts ATP.

Homodimer.

It carries out the reaction XMP + L-glutamine + ATP + H2O = GMP + L-glutamate + AMP + diphosphate + 2 H(+). Its pathway is purine metabolism; GMP biosynthesis; GMP from XMP (L-Gln route): step 1/1. Catalyzes the synthesis of GMP from XMP. The chain is GMP synthase [glutamine-hydrolyzing] (guaA) from Mycobacterium tuberculosis (strain CDC 1551 / Oshkosh).